Here is a 211-residue protein sequence, read N- to C-terminus: Eukaryotic translation initiation factor 4E (211 aa).

The protein belongs to the eukaryotic initiation factor 4E family. In terms of assembly, eIF4F is a multi-subunit complex, the composition of which varies with external and internal environmental conditions. It is composed of at least eIF4A, eIF4E and eIF4G. eIF4E is also known to interact with other partners.

Recognizes and binds the 7-methylguanosine-containing mRNA cap during an early step in the initiation of protein synthesis and facilitates ribosome binding by inducing the unwinding of the mRNAs secondary structures. This Eremothecium gossypii (strain ATCC 10895 / CBS 109.51 / FGSC 9923 / NRRL Y-1056) (Yeast) protein is Eukaryotic translation initiation factor 4E (TIF45).